Consider the following 60-residue polypeptide: MFTLKKPLLVLFFLATINLSLCEQERNAEEERRDDDERNVEVEKRFFPIVGKLLSGLFGK.

Positions 1-22 (MFTLKKPLLVLFFLATINLSLC) are cleaved as a signal peptide. Positions 23-43 (EQERNAEEERRDDDERNVEVE) are cleaved as a propeptide — removed in mature form.

As to expression, expressed by the skin glands.

It is found in the secreted. Functionally, antimicrobial peptide active against a variety of Gram-positive bacterial strains but not against Gram-negative bacteria. Has weak antifungal activity against a slime mold isolate. Has weak hemolytic activity against human erythrocytes. The polypeptide is Temporin-CG2 (Amolops chunganensis (Chungan torrent frog)).